Consider the following 537-residue polypeptide: Exoglucanase 1 (537 aa).

Positions 1–18 (MKGSISYQIYKGALLLSA) are cleaved as a signal peptide. The tract at residues 19–453 (LLNSVSAQQV…YVIYSNIKTG (435 aa)) is catalytic. An N-linked (GlcNAc...) asparagine glycan is attached at Asn136. Glu235 (nucleophile) is an active-site residue. The active-site Proton donor is Glu240. Residues Asn414 and Asn456 are each glycosylated (N-linked (GlcNAc...) asparagine). The interval 454–477 (PLNSTFTGGTTSSSSTTTTTSKST) is linker. Low complexity predominate over residues 458–502 (TFTGGTTSSSSTTTTTSKSTSTSSSSKTTTTVTTTTTSSGSSGTG). The interval 458–503 (TFTGGTTSSSSTTTTTSKSTSTSSSSKTTTTVTTTTTSSGSSGTGA) is disordered. Residues 501–537 (TGARDWAQCGGNGWTGPTTCVSPYTCTKQNDWYSQCL) enclose the CBM1 domain. 2 cysteine pairs are disulfide-bonded: Cys509-Cys526 and Cys520-Cys536.

Belongs to the glycosyl hydrolase 7 (cellulase C) family.

The protein localises to the secreted. The catalysed reaction is Hydrolysis of (1-&gt;4)-beta-D-glucosidic linkages in cellulose and cellotetraose, releasing cellobiose from the non-reducing ends of the chains.. The chain is Exoglucanase 1 (cbh1) from Penicillium janthinellum (Penicillium vitale).